A 141-amino-acid polypeptide reads, in one-letter code: Small ribosomal subunit protein uS19 (141 aa).

The protein belongs to the universal ribosomal protein uS19 family.

Protein S19 forms a complex with S13 that binds strongly to the 16S ribosomal RNA. The chain is Small ribosomal subunit protein uS19 from Thermofilum pendens (strain DSM 2475 / Hrk 5).